The sequence spans 430 residues: MALDVQSDIVAYDAPKKDLYEIGEMPPLGHVPKEMYAWAIRRERHGEPDQAMQIEVVETPSIDSHEVLVLVMAAGVNYNGIWAGLGVPVSPFDGHKQPYHIAGSDASGIVWAVGDKVKRWKVGDEVVIHCNQDDGDDEECNGGDPMFSPTQRIWGYETPDGSFAQFTRVQAQQLMKRPKHLTWEEAACYTLTLATAYRMLFGHKPHDLKPGQNVLVWGASGGLGSYAIQLINTAGANAIGVISEEDKRDFVMGLGAKGVINRKDFKCWGQLPKVNSPEYNEWLKEARKFGKAIWDITGKGINVDMVFEHPGEATFPVSSLVVKKGGMVVICAGTTGFNCTFDVRYMWMHQKRLQGSHFANLKQASAANQLMIERRLDPCMSEVFPWAEIPAAHTKMYRNQHKPGNMAVLVQAPRTGLRTFADVLEAGRKA.

This sequence belongs to the zinc-containing alcohol dehydrogenase family. Crotonyl-CoA carboxylase/reductase subfamily. As to quaternary structure, homodimer. The cofactor is Despite some sequence similarity to zinc-containing alcohol dehydrogenases, this enzyme does not bind any metals..

It carries out the reaction (2S)-ethylmalonyl-CoA + NADP(+) = (2E)-butenoyl-CoA + CO2 + NADPH. It catalyses the reaction (S)-methylmalonyl-CoA + NADP(+) = acryloyl-CoA + CO2 + NADPH. The catalysed reaction is butanoyl-CoA + NADP(+) = (2E)-butenoyl-CoA + NADPH + H(+). In terms of biological role, catalyzes the NADPH-dependent reductive carboxylation of crotonyl-CoA ((2E)-butenoyl-CoA) to (2S)-ethylmalonyl-CoA, in the presence of CO2. This is a key reaction in the ethylmalonyl-CoA pathway for acetyl-CoA assimilation required for R.sphaeroides growth on acetate as sole carbon source. Is also able to accept acryloyl-CoA as an alternative substrate, yielding (2S)-methylmalonyl-CoA. To a lesser extent, when CO2 is absent, the enzyme also catalyzes the reduction of crotonyl-CoA to butanoyl-CoA. The sequence is that of Crotonyl-CoA carboxylase/reductase from Cereibacter sphaeroides (strain ATCC 17023 / DSM 158 / JCM 6121 / CCUG 31486 / LMG 2827 / NBRC 12203 / NCIMB 8253 / ATH 2.4.1.) (Rhodobacter sphaeroides).